We begin with the raw amino-acid sequence, 162 residues long: RNA pyrophosphohydrolase (162 aa).

Residues 7–149 (EYRPCVGIML…KKEVYKKVIE (143 aa)) enclose the Nudix hydrolase domain. The short motif at 40–61 (GGVDEGEELEQAALRELLEEVG) is the Nudix box element.

The protein belongs to the Nudix hydrolase family. RppH subfamily. A divalent metal cation serves as cofactor.

Accelerates the degradation of transcripts by removing pyrophosphate from the 5'-end of triphosphorylated RNA, leading to a more labile monophosphorylated state that can stimulate subsequent ribonuclease cleavage. The polypeptide is RNA pyrophosphohydrolase (Wolbachia pipientis subsp. Culex pipiens (strain wPip)).